Reading from the N-terminus, the 540-residue chain is Upstream-binding protein 1 (540 aa).

The residue at position 22 (serine 22) is a Phosphoserine. Positions 60–296 (EHPPFQYVMC…EQKKSSKRTL (237 aa)) constitute a Grh/CP2 DB domain. Disordered stretches follow at residues 236–270 (KPKG…DTTI) and 285–368 (EHEQ…QPSA). Residues 238-262 (KGADRKQKTDREKMEKRTAHEKEKY) are compositionally biased toward basic and acidic residues. A compositionally biased stretch (polar residues) spans 320–368 (YVNNSPSPAPTFTSPQQSTCSVPDSNSSSPNHQGDGASQTSGEQIQPSA). Residues serine 390 and serine 393 each carry the phosphoserine modification.

This sequence belongs to the grh/CP2 family. CP2 subfamily. As to quaternary structure, interacts with TFCP2. Interacts with PIAS1, and is probably part of a complex containing TFCP2, UBP1 and PIAS1. In terms of tissue distribution, expressed in adrenal tissue, JEG-3, NCI-H295A, Hep-G2 and HeLa cell lines.

It localises to the nucleus. In terms of biological role, functions as a transcriptional activator in a promoter context-dependent manner. Modulates the placental expression of CYP11A1. Involved in regulation of the alpha-globin gene in erythroid cells. Activation of the alpha-globin promoter in erythroid cells is via synergistic interaction with TFCP2. Involved in regulation of the alpha-globin gene in erythroid cells. Binds strongly to sequences around the HIV-1 initiation site and weakly over the TATA-box. Represses HIV-1 transcription by inhibiting the binding of TFIID to the TATA-box. The sequence is that of Upstream-binding protein 1 (UBP1) from Homo sapiens (Human).